Here is a 530-residue protein sequence, read N- to C-terminus: Cation channel sperm-associated protein 2 (530 aa).

The Cytoplasmic portion of the chain corresponds to 1–108; sequence MAAYQQEEQM…LWAGWVLECP (108 aa). Residues 109–131 traverse the membrane as a helical segment; it reads LFKNFIIFLVFLNTIILMVEIEL. Residues 132–140 lie on the Extracellular side of the membrane; the sequence is LESTNTKLW. A helical transmembrane segment spans residues 141–166; the sequence is PLKLTLEVAAWFILLIFILEILLKWL. Residues 167 to 175 are Cytoplasmic-facing; that stretch reads SNFSVFWKS. Residues 176–200 traverse the membrane as a helical segment; that stretch reads AWNVFDFVVTMLSLLPEVVVLVGVT. Over 201–203 the chain is Extracellular; that stretch reads GQS. Residues 204 to 222 traverse the membrane as a helical segment; sequence VWLQLLRICRVLRSLKLLA. Residues 223–239 lie on the Cytoplasmic side of the membrane; that stretch reads QFRQIQIIILVLVRALK. Residues 240–262 form a helical membrane-spanning segment; the sequence is SMTFLLMLLLIFFYIFAVTGVYV. Residues 263-281 lie on the Extracellular side of the membrane; it reads FSEYTRSPRQDLEYHVFFS. The segment at residues 282-294 is an intramembrane region (helical; Pore-forming); it reads DLPNSLVTVFILF. Residues 295–314 lie on the Extracellular side of the membrane; it reads TLDHWYALLQDVWKVPEVSR. The helical transmembrane segment at 315–341 threads the bilayer; sequence IFSSIYFILWLLLGSIIFRSIIVAMMV. At 342–530 the chain is on the cytoplasmic side; it reads TNFQNIRKEL…VQALMNLEDK (189 aa). The disordered stretch occupies residues 378–458; sequence MSHEALTSSH…TSSSYSSSSE (81 aa). Residues 429–440 show a composition bias toward basic and acidic residues; it reads KTEETLSKKREY. Over residues 442–458 the composition is skewed to low complexity; that stretch reads SSSCVSSTSSSYSSSSE.

Belongs to the cation channel sperm-associated (TC 1.A.1.19) family. In terms of assembly, component of the CatSper complex or CatSpermasome composed of the core pore-forming members CATSPER1, CATSPER2, CATSPER3 and CATSPER4 as well as auxiliary members CATSPERB, CATSPERG, CATSPERD, CATSPERE, CATSPERZ, C2CD6/CATSPERT, TMEM249, TMEM262 and EFCAB9. HSPA1 may be an additional auxiliary complex member. The core complex members CATSPER1, CATSPER2, CATSPER3 and CATSPER4 form a heterotetrameric channel. The auxiliary CATSPERB, CATSPERG, CATSPERD and CATSPERE subunits form a pavilion-like structure over the pore which stabilizes the complex through interactions with CATSPER4, CATSPER3, CATSPER1 and CATSPER2 respectively. TMEM262/CATSPERH interacts with CATSPERB, further stabilizing the complex. C2CD6/CATSPERT interacts at least with CATSPERD and is required for targeting the CatSper complex in the flagellar membrane. Interacts with Ca(v)3.3/CACNA1I, leading to suppression of T-type calcium channel activity. In terms of tissue distribution, testis-specific.

It localises to the cell projection. Its subcellular location is the cilium. The protein resides in the flagellum membrane. It catalyses the reaction Ca(2+)(in) = Ca(2+)(out). Its activity is regulated as follows. The CatSper calcium channel is indirectly activated by extracellular progesterone and prostaglandins following the sequence: progesterone &gt; PGF1-alpha = PGE1 &gt; PGA1 &gt; PGE2 &gt;&gt; PGD2. The CatSper calcium channel is directly inhibited by endocannabinoid 2-arachidonoylglycerol (2AG). Indirect activation by progesterone takes place via the following mechanism: progesterone binds and activates the acylglycerol lipase ABHD2, which in turn mediates hydrolysis of 2AG inhibitor, relieving inhibition of the CatSper channel. The primary effect of progesterone activation is to shift voltage dependence towards more physiological, negative membrane potentials; it is not mediated by metabotropic receptors and second messengers. Sperm capacitation enhances the effect of progesterone by providing additional negative shift. Also activated by the elevation of intracellular pH. Pore-forming subunit of the CatSper complex, a sperm-specific voltage-gated calcium channel, that plays a central role in calcium-dependent physiological responses essential for successful fertilization, such as sperm hyperactivation, acrosome reaction and chemotaxis towards the oocyte. In Homo sapiens (Human), this protein is Cation channel sperm-associated protein 2 (CATSPER2).